Here is a 78-residue protein sequence, read N- to C-terminus: Translation initiation factor IF-1 (78 aa).

An S1-like domain is found at 1–72; it reads MAKEAEMEFE…TRGRITYRKI (72 aa).

Belongs to the IF-1 family. As to quaternary structure, component of the 30S ribosomal translation pre-initiation complex which assembles on the 30S ribosome in the order IF-2 and IF-3, IF-1 and N-formylmethionyl-tRNA(fMet); mRNA recruitment can occur at any time during PIC assembly.

The protein localises to the cytoplasm. Its function is as follows. One of the essential components for the initiation of protein synthesis. Stabilizes the binding of IF-2 and IF-3 on the 30S subunit to which N-formylmethionyl-tRNA(fMet) subsequently binds. Helps modulate mRNA selection, yielding the 30S pre-initiation complex (PIC). Upon addition of the 50S ribosomal subunit IF-1, IF-2 and IF-3 are released leaving the mature 70S translation initiation complex. This chain is Translation initiation factor IF-1, found in Mesoplasma florum (strain ATCC 33453 / NBRC 100688 / NCTC 11704 / L1) (Acholeplasma florum).